The following is a 389-amino-acid chain: Chalcone synthase 1 (389 aa).

Cys-164 is an active-site residue.

This sequence belongs to the thiolase-like superfamily. Chalcone/stilbene synthases family.

The catalysed reaction is (E)-4-coumaroyl-CoA + 3 malonyl-CoA + 3 H(+) = 2',4,4',6'-tetrahydroxychalcone + 3 CO2 + 4 CoA. Its pathway is secondary metabolite biosynthesis; flavonoid biosynthesis. The primary product of this enzyme is 4,2',4',6'-tetrahydroxychalcone (also termed naringenin-chalcone or chalcone) which can under specific conditions spontaneously isomerize into naringenin. In Pisum sativum (Garden pea), this protein is Chalcone synthase 1 (CHS1).